A 1903-amino-acid chain; its full sequence is Plexin-A4 (1903 aa).

The first 26 residues, 1 to 26 (MAFHNRRWNFTFSCCVVVLLLPLVAA), serve as a signal peptide directing secretion. A Sema domain is found at 27–515 (RPQQPSAATR…SESQLTRVPV (489 aa)). Topologically, residues 27–1246 (RPQQPSAATR…ITSDSPLSST (1220 aa)) are extracellular. Disulfide bonds link Cys97–Cys106 and Cys132–Cys140. N-linked (GlcNAc...) asparagine glycosylation is present at Asn166. 3 cysteine pairs are disulfide-bonded: Cys291–Cys413, Cys307–Cys364, and Cys382–Cys401. Residue Asn450 is glycosylated (N-linked (GlcNAc...) asparagine). A PSI 1 domain is found at 517-567 (ACEQYSSCNECLGSGDPHCGWCVLHSMCTRKEKCERSSEPRRFASNIKQCV). 4 disulfide bridges follow: Cys518-Cys535, Cys524-Cys566, Cys527-Cys544, and Cys538-Cys550. N-linked (GlcNAc...) asparagine glycans are attached at residues Asn575 and Asn600. Cys601 and Cys620 are disulfide-bonded. N-linked (GlcNAc...) asparagine glycans are attached at residues Asn656, Asn663, Asn764, and Asn772. The PSI 2 domain maps to 663 to 710 (NCSVHKSCLSCVGSPYQCHWCKYRHTCTHDPSSCSFQEGRVKQPEECP). Residues 811–864 (KCDARRESCGLCLKADPLFGCVWCKGENRCSLKQHCSYPQSMWLEHNGINSKCT) enclose the PSI 3 domain. IPT/TIG domains follow at residues 866–960 (PRIT…YYFV), 962–1046 (PQLL…FEYV), 1049–1148 (PTIT…FVYY), and 1151–1246 (PVFE…LSST). Asn981, Asn992, Asn1025, Asn1141, Asn1189, and Asn1214 each carry an N-linked (GlcNAc...) asparagine glycan. A helical membrane pass occupies residues 1247-1267 (AVISIAGAGGLLIFFIVIVLI). The Cytoplasmic segment spans residues 1268-1903 (AYKRKSRESD…QVVAFMSLES (636 aa)).

The protein belongs to the plexin family.

It is found in the cell membrane. Involved in the development of primary sensory neurons especially in branching of the peripheral axons. Interacts with the SLIT2 signaling specifically to promote axonal branching of Rohon-Beard neurons and the trigeminal sensory ganglion neurons. The chain is Plexin-A4 (plxna4) from Danio rerio (Zebrafish).